The chain runs to 206 residues: Small ribosomal subunit protein uS4 (206 aa).

Residues 96–156 (GRLDNVVYRM…EKAKKQSRVK (61 aa)) form the S4 RNA-binding domain.

It belongs to the universal ribosomal protein uS4 family. Part of the 30S ribosomal subunit. Contacts protein S5. The interaction surface between S4 and S5 is involved in control of translational fidelity.

In terms of biological role, one of the primary rRNA binding proteins, it binds directly to 16S rRNA where it nucleates assembly of the body of the 30S subunit. Functionally, with S5 and S12 plays an important role in translational accuracy. The protein is Small ribosomal subunit protein uS4 of Escherichia fergusonii (strain ATCC 35469 / DSM 13698 / CCUG 18766 / IAM 14443 / JCM 21226 / LMG 7866 / NBRC 102419 / NCTC 12128 / CDC 0568-73).